Consider the following 443-residue polypeptide: MALRLGQLGSGPWWRAVRGDYAQLRAPSPRSASACVCRLPGTAGTQPRRGLGHGSSAGGGSRLGTGLAAALAGMAGLAAAVLGHVQRAEMVPKSSGARSPSPGRLEEDGDELARRCSTFMSSPVTELRELGRRPDDMKTKMELMIMETQAQVCRALAQVDGVADFSVDRWERKEGGGGITCVLQDGRVFEKAGVNISVVHGNLSEEAANQMRSRGKALKKKDGKLPFTAMGISSVIHPKNPYAPTMHFNYRYFEVEEADGKMHWWFGGGCDLTPTYLNREDAVHFHRTLKEACDQHGPDIYPKFKKWCDDYFFIAHRGERRGIGGIFFDDLDSPSKEEAFRFVKTCAEAVVPSYVPIVKKHCDDSYTPQDKLWQQLRRGRYVEFNLVYDRGTKFGLFTPGSRIESILMSLPLTARWEYMHSPPENSKEAEILEVLRHPKDWVH.

The transit peptide at 1-98 (MALRLGQLGS…EMVPKSSGAR (98 aa)) directs the protein to the mitochondrion. A disordered region spans residues 90–111 (MVPKSSGARSPSPGRLEEDGDE). The residue at position 101 (S101) is a Phosphoserine. The tract at residues 182–191 (VLQDGRVFEK) is important for dimerization. Residue S233 participates in coproporphyrinogen III binding. H247 serves as the catalytic Proton donor. 249–251 (NYR) lines the coproporphyrinogen III pocket. The tract at residues 381-417 (YVEFNLVYDRGTKFGLFTPGSRIESILMSLPLTARWE) is important for dimerization. The residue at position 393 (K393) is an N6-acetyllysine; alternate. At K393 the chain carries N6-succinyllysine; alternate. 400–402 (GSR) serves as a coordination point for coproporphyrinogen III.

The protein belongs to the aerobic coproporphyrinogen-III oxidase family. As to quaternary structure, homodimer.

The protein localises to the mitochondrion intermembrane space. It catalyses the reaction coproporphyrinogen III + O2 + 2 H(+) = protoporphyrinogen IX + 2 CO2 + 2 H2O. It functions in the pathway porphyrin-containing compound metabolism; protoporphyrin-IX biosynthesis; protoporphyrinogen-IX from coproporphyrinogen-III (O2 route): step 1/1. Involved in the heme biosynthesis. Catalyzes the aerobic oxidative decarboxylation of propionate groups of rings A and B of coproporphyrinogen-III to yield the vinyl groups in protoporphyrinogen-IX. The sequence is that of Oxygen-dependent coproporphyrinogen-III oxidase, mitochondrial from Rattus norvegicus (Rat).